The following is a 375-amino-acid chain: Protein arginine N-methyltransferase 6 (375 aa).

Residues 1–38 (MSQPKKRKLESGGGGEGGEGTEEEDGAEREAALERPRR) are disordered. Thr21 is modified (phosphothreonine). The span at 28–38 (EREAALERPRR) shows a compositional bias: basic and acidic residues. Residues Arg29, Arg35, and Arg37 each carry the asymmetric dimethylarginine; by autocatalysis modification. Positions 44–374 (DQLYYECYSD…EEKTKDFAME (331 aa)) constitute an SAM-dependent MTase PRMT-type domain. His57, Arg66, Gly90, Glu112, and Glu141 together coordinate S-adenosyl-L-methionine. Catalysis depends on residues Glu155 and Glu164.

This sequence belongs to the class I-like SAM-binding methyltransferase superfamily. Protein arginine N-methyltransferase family. PRMT6 subfamily. In terms of assembly, interacts with EPB41L3 and NCOA1. As to quaternary structure, (Microbial infection) Interacts with (and methylates) HIV-1 Tat, Rev and Nucleocapsid protein p7 (NC). (Microbial infection) Interacts with human cytomegalovirus protein UL69. Automethylation enhances its stability and antiretroviral activity. As to expression, highly expressed in kidney and testis.

It is found in the nucleus. It carries out the reaction L-arginyl-[protein] + 2 S-adenosyl-L-methionine = N(omega),N(omega)-dimethyl-L-arginyl-[protein] + 2 S-adenosyl-L-homocysteine + 2 H(+). Functionally, arginine methyltransferase that can catalyze the formation of both omega-N monomethylarginine (MMA) and asymmetrical dimethylarginine (aDMA), with a strong preference for the formation of aDMA. Preferentially methylates arginyl residues present in a glycine and arginine-rich domain and displays preference for monomethylated substrates. Specifically mediates the asymmetric dimethylation of histone H3 'Arg-2' to form H3R2me2a. H3R2me2a represents a specific tag for epigenetic transcriptional repression and is mutually exclusive with methylation on histone H3 'Lys-4' (H3K4me2 and H3K4me3). Acts as a transcriptional repressor of various genes such as HOXA2, THBS1 and TP53. Repression of TP53 blocks cellular senescence. Also methylates histone H2A and H4 'Arg-3' (H2AR3me and H4R3me, respectively). Acts as a regulator of DNA base excision during DNA repair by mediating the methylation of DNA polymerase beta (POLB), leading to the stimulation of its polymerase activity by enhancing DNA binding and processivity. Methylates HMGA1. Regulates alternative splicing events. Acts as a transcriptional coactivator of a number of steroid hormone receptors including ESR1, ESR2, PGR and NR3C1. Promotes fasting-induced transcriptional activation of the gluconeogenic program through methylation of the CRTC2 transcription coactivator. May play a role in innate immunity against HIV-1 in case of infection by methylating and impairing the function of various HIV-1 proteins such as Tat, Rev and Nucleocapsid protein p7 (NC). Methylates GPS2, protecting GPS2 from ubiquitination and degradation. Methylates SIRT7, inhibiting SIRT7 histone deacetylase activity and promoting mitochondria biogenesis. The protein is Protein arginine N-methyltransferase 6 (PRMT6) of Homo sapiens (Human).